A 367-amino-acid chain; its full sequence is Leucine dehydrogenase (367 aa).

Lys-80 is an active-site residue. 180–186 contacts NAD(+); sequence GVGNVAY.

It belongs to the Glu/Leu/Phe/Val dehydrogenases family. In terms of assembly, homohexamer.

The catalysed reaction is L-leucine + NAD(+) + H2O = 4-methyl-2-oxopentanoate + NH4(+) + NADH + H(+). It functions in the pathway amino-acid degradation; L-leucine degradation; 4-methyl-2-oxopentanoate from L-leucine (dehydrogenase route): step 1/1. In terms of biological role, catalyzes the reversible deamination of L-leucine to 4-methyl-2-oxopentanoate. The protein is Leucine dehydrogenase (ldh) of Geobacillus stearothermophilus (Bacillus stearothermophilus).